We begin with the raw amino-acid sequence, 211 residues long: MYQPDFPTVPFRLGLYPVVDSVQWIERLLEAGVRTIQLRIKDKRDEEVEADIIAAIALGRRYDARLFINDYWRLAIKHRAYGVHLGQEDLETTDLEAIQAAGLRLGVSTHDDMEIDIALAAKPSYIALGHVFPTQTKQMPSAPQGLAQLASHIERLADYPTVAIGGISLERAPSVLATGVGSIAVVSAITQAADWRAATAQLLDIAGVGDE.

4-amino-2-methyl-5-(diphosphooxymethyl)pyrimidine contacts are provided by residues 37–41 and N69; that span reads QLRIK. Residues D70 and D89 each contribute to the Mg(2+) site. S108 is a binding site for 4-amino-2-methyl-5-(diphosphooxymethyl)pyrimidine. 134-136 is a binding site for 2-[(2R,5Z)-2-carboxy-4-methylthiazol-5(2H)-ylidene]ethyl phosphate; that stretch reads TQT. K137 contacts 4-amino-2-methyl-5-(diphosphooxymethyl)pyrimidine. Residues G166 and 186 to 187 each bind 2-[(2R,5Z)-2-carboxy-4-methylthiazol-5(2H)-ylidene]ethyl phosphate; that span reads VS.

The protein belongs to the thiamine-phosphate synthase family. Mg(2+) is required as a cofactor.

The enzyme catalyses 2-[(2R,5Z)-2-carboxy-4-methylthiazol-5(2H)-ylidene]ethyl phosphate + 4-amino-2-methyl-5-(diphosphooxymethyl)pyrimidine + 2 H(+) = thiamine phosphate + CO2 + diphosphate. It catalyses the reaction 2-(2-carboxy-4-methylthiazol-5-yl)ethyl phosphate + 4-amino-2-methyl-5-(diphosphooxymethyl)pyrimidine + 2 H(+) = thiamine phosphate + CO2 + diphosphate. It carries out the reaction 4-methyl-5-(2-phosphooxyethyl)-thiazole + 4-amino-2-methyl-5-(diphosphooxymethyl)pyrimidine + H(+) = thiamine phosphate + diphosphate. The protein operates within cofactor biosynthesis; thiamine diphosphate biosynthesis; thiamine phosphate from 4-amino-2-methyl-5-diphosphomethylpyrimidine and 4-methyl-5-(2-phosphoethyl)-thiazole: step 1/1. Its function is as follows. Condenses 4-methyl-5-(beta-hydroxyethyl)thiazole monophosphate (THZ-P) and 2-methyl-4-amino-5-hydroxymethyl pyrimidine pyrophosphate (HMP-PP) to form thiamine monophosphate (TMP). The polypeptide is Thiamine-phosphate synthase (Salmonella schwarzengrund (strain CVM19633)).